Here is a 70-residue protein sequence, read N- to C-terminus: Probable tautomerase RSp0893 (70 aa).

The Proton acceptor; via imino nitrogen role is filled by Pro-2.

The protein belongs to the 4-oxalocrotonate tautomerase family.

This Ralstonia nicotianae (strain ATCC BAA-1114 / GMI1000) (Ralstonia solanacearum) protein is Probable tautomerase RSp0893.